The sequence spans 114 residues: Probable 4-amino-4-deoxy-L-arabinose-phosphoundecaprenol flippase subunit ArnE (114 aa).

Helical transmembrane passes span 41–61 (PWLI…IYLL), 64–84 (LPLS…LIGS), and 94–114 (YHNW…GGLL). The 60-residue stretch at 53–112 (GMLLWIYLLQRLPLSMAYPMLSINLVLVLIGSRLFFHEQISYHNWLGAGAIIIGALLLGG) folds into the EamA domain.

This sequence belongs to the ArnE family. In terms of assembly, heterodimer of ArnE and ArnF.

It is found in the cell inner membrane. It functions in the pathway bacterial outer membrane biogenesis; lipopolysaccharide biosynthesis. Functionally, translocates 4-amino-4-deoxy-L-arabinose-phosphoundecaprenol (alpha-L-Ara4N-phosphoundecaprenol) from the cytoplasmic to the periplasmic side of the inner membrane. In Aeromonas salmonicida (strain A449), this protein is Probable 4-amino-4-deoxy-L-arabinose-phosphoundecaprenol flippase subunit ArnE.